The primary structure comprises 320 residues: METGNQTHAQEFLLLGFSATSEIQFILFGLFLSMYLVTFTGNLLIILAICSDSHLHTPMYFFLSNLSFADLCFTSTTVPKMLLNILTQNKFITYAGCLSQIFFFTSFGCLDNLLLTVMAYDRFVAVCHPLHYTVIMNPQLCGLLVLGSWCISVMGSLLETLTVLRLSFCTEMEIPHFFCDLLEVLKLACSDTFINNVVIYFATGVLGVISFTGIFFSYYKIVFSILRISSAGRKHKAFSTCGSHLSVVTLFYGTGFGVYLSSAATPSSRTSLVASVMYTMVTPMLNPFIYSLRNTDMKRALGRLLSRATFFNGDITAGLS.

At 1–25 (METGNQTHAQEFLLLGFSATSEIQF) the chain is on the extracellular side. A glycan (N-linked (GlcNAc...) asparagine) is linked at Asn-5. Residues 26–46 (ILFGLFLSMYLVTFTGNLLII) traverse the membrane as a helical segment. Residues 47–54 (LAICSDSH) lie on the Cytoplasmic side of the membrane. The helical transmembrane segment at 55–75 (LHTPMYFFLSNLSFADLCFTS) threads the bilayer. Residues 76-99 (TTVPKMLLNILTQNKFITYAGCLS) are Extracellular-facing. Cysteines 97 and 189 form a disulfide. Residues 100 to 120 (QIFFFTSFGCLDNLLLTVMAY) traverse the membrane as a helical segment. Residues 121 to 139 (DRFVAVCHPLHYTVIMNPQ) are Cytoplasmic-facing. A helical membrane pass occupies residues 140-160 (LCGLLVLGSWCISVMGSLLET). Residues 161 to 197 (LTVLRLSFCTEMEIPHFFCDLLEVLKLACSDTFINNV) lie on the Extracellular side of the membrane. A helical transmembrane segment spans residues 198–217 (VIYFATGVLGVISFTGIFFS). At 218–237 (YYKIVFSILRISSAGRKHKA) the chain is on the cytoplasmic side. A helical membrane pass occupies residues 238 to 258 (FSTCGSHLSVVTLFYGTGFGV). Residues 259–271 (YLSSAATPSSRTS) are Extracellular-facing. A helical transmembrane segment spans residues 272–292 (LVASVMYTMVTPMLNPFIYSL). The Cytoplasmic segment spans residues 293 to 313 (RNTDMKRALGRLLSRATFFNG).

Belongs to the G-protein coupled receptor 1 family.

It is found in the cell membrane. Odorant receptor. This chain is Olfactory receptor 7C1 (OR7C1), found in Homo sapiens (Human).